An 82-amino-acid polypeptide reads, in one-letter code: RNA-binding protein Hfq (82 aa).

In terms of domain architecture, Sm spans 9-68 (DPYLNTLRKERVPVSIYLVNGIKLQGQIESFDQFVILLKNTVSQMVYKHAISTVVPSRPV).

The protein belongs to the Hfq family. In terms of assembly, homohexamer.

RNA chaperone that binds small regulatory RNA (sRNAs) and mRNAs to facilitate mRNA translational regulation in response to envelope stress, environmental stress and changes in metabolite concentrations. Also binds with high specificity to tRNAs. In Pseudomonas aeruginosa (strain LESB58), this protein is RNA-binding protein Hfq.